Reading from the N-terminus, the 157-residue chain is 2-C-methyl-D-erythritol 2,4-cyclodiphosphate synthase (157 aa).

A divalent metal cation-binding residues include aspartate 8 and histidine 10. 4-CDP-2-C-methyl-D-erythritol 2-phosphate contacts are provided by residues 8 to 10 and 34 to 35; these read DVH and HS. Histidine 42 is a binding site for a divalent metal cation. Residues 56 to 58, 61 to 65, 100 to 106, 132 to 135, phenylalanine 139, and arginine 142 each bind 4-CDP-2-C-methyl-D-erythritol 2-phosphate; these read DIG, FPDTD, AQAPKMA, and TTTE.

The protein belongs to the IspF family. As to quaternary structure, homotrimer. It depends on a divalent metal cation as a cofactor.

It carries out the reaction 4-CDP-2-C-methyl-D-erythritol 2-phosphate = 2-C-methyl-D-erythritol 2,4-cyclic diphosphate + CMP. The protein operates within isoprenoid biosynthesis; isopentenyl diphosphate biosynthesis via DXP pathway; isopentenyl diphosphate from 1-deoxy-D-xylulose 5-phosphate: step 4/6. In terms of biological role, involved in the biosynthesis of isopentenyl diphosphate (IPP) and dimethylallyl diphosphate (DMAPP), two major building blocks of isoprenoid compounds. Catalyzes the conversion of 4-diphosphocytidyl-2-C-methyl-D-erythritol 2-phosphate (CDP-ME2P) to 2-C-methyl-D-erythritol 2,4-cyclodiphosphate (ME-CPP) with a corresponding release of cytidine 5-monophosphate (CMP). This chain is 2-C-methyl-D-erythritol 2,4-cyclodiphosphate synthase, found in Pseudomonas syringae pv. syringae (strain B728a).